Here is a 392-residue protein sequence, read N- to C-terminus: B2 bradykinin receptor (392 aa).

Residues 1–61 (MPCSWKLLGF…EWWSWLNAIQ (61 aa)) are Extracellular-facing. N-linked (GlcNAc...) asparagine glycosylation is found at asparagine 29 and asparagine 40. Residues 62-85 (APFLWVLFLLAALENLFVLSVFFL) traverse the membrane as a helical segment. Topologically, residues 86–94 (HKNSCTVAE) are cytoplasmic. Residues 95 to 119 (IYLGNLAAADLILACGLPFWAITIA) traverse the membrane as a helical segment. The Extracellular segment spans residues 120-132 (NNFDWVFGEVLCR). A disulfide bridge connects residues cysteine 131 and cysteine 212. A helical membrane pass occupies residues 133-154 (VVNTMIYMNLYSSICFLMLVSI). Over 155-176 (DRYLALVKTMSMGRMRGVRWAK) the chain is Cytoplasmic. Phosphotyrosine is present on tyrosine 157. A helical membrane pass occupies residues 177 to 199 (LYSLVIWGCTLLLSSPMLVFRTM). The Extracellular portion of the chain corresponds to 200–222 (REYSEEGHNVTACVIVYPSRSWE). N-linked (GlcNAc...) asparagine glycosylation is present at asparagine 208. A helical membrane pass occupies residues 223–249 (VFTNVLLNLVGFLLPLSVITFCTVRIL). Over 250-268 (QVLRNNEMKKFKEVQTERK) the chain is Cytoplasmic. The helical transmembrane segment at 269–293 (ATVLVLAVLGLFVLCWVPFQISTFL) threads the bilayer. Over 294 to 312 (DTLLRLGVLSGCWDEHAVD) the chain is Extracellular. The chain crosses the membrane as a helical span at residues 313 to 336 (VITQISSYVAYSNSGLNPLVYVIV). At 337–392 (GKRFRKKSREVYRVLCQKGGCMGEPVQMENSMGTLRTSISVERQIHKLQDWAGKKQ) the chain is on the cytoplasmic side. Tyrosine 348 carries the post-translational modification Phosphotyrosine. Cysteine 352 carries the S-palmitoyl cysteine lipid modification. Serine 367 is modified (phosphoserine). A Phosphothreonine modification is found at threonine 370. Phosphoserine; by GRK6 occurs at positions 374 and 376.

The protein belongs to the G-protein coupled receptor 1 family. Bradykinin receptor subfamily. BDKRB2 sub-subfamily. Forms a complex with PECAM1 and GNAQ. Interacts with PECAM1.

The protein localises to the cell membrane. In terms of biological role, receptor for bradykinin. It is associated with G proteins that activate a phosphatidylinositol-calcium second messenger system. The chain is B2 bradykinin receptor (Bdkrb2) from Mus musculus (Mouse).